The sequence spans 102 residues: N(4)-acetylcytidine amidohydrolase (102 aa).

An ASCH domain is found at 6–93; sequence TFFSRFEQDI…IKEIYPGLDE (88 aa). Lys20 (proton acceptor) is an active-site residue. Thr23 acts as the Nucleophile in catalysis. Catalysis depends on Glu73, which acts as the Proton donor.

The protein belongs to the N(4)-acetylcytidine amidohydrolase family.

The catalysed reaction is N(4)-acetylcytidine + H2O = cytidine + acetate + H(+). The enzyme catalyses N(4)-acetyl-2'-deoxycytidine + H2O = 2'-deoxycytidine + acetate + H(+). It carries out the reaction N(4)-acetylcytosine + H2O = cytosine + acetate + H(+). In terms of biological role, catalyzes the hydrolysis of N(4)-acetylcytidine (ac4C). The chain is N(4)-acetylcytidine amidohydrolase from Serratia proteamaculans (strain 568).